Reading from the N-terminus, the 306-residue chain is UDP-3-O-acyl-N-acetylglucosamine deacetylase (306 aa).

The Zn(2+) site is built by His-79, His-238, and Asp-242. His-265 acts as the Proton donor in catalysis.

The protein belongs to the LpxC family. Zn(2+) serves as cofactor.

The enzyme catalyses a UDP-3-O-[(3R)-3-hydroxyacyl]-N-acetyl-alpha-D-glucosamine + H2O = a UDP-3-O-[(3R)-3-hydroxyacyl]-alpha-D-glucosamine + acetate. The protein operates within glycolipid biosynthesis; lipid IV(A) biosynthesis; lipid IV(A) from (3R)-3-hydroxytetradecanoyl-[acyl-carrier-protein] and UDP-N-acetyl-alpha-D-glucosamine: step 2/6. In terms of biological role, catalyzes the hydrolysis of UDP-3-O-myristoyl-N-acetylglucosamine to form UDP-3-O-myristoylglucosamine and acetate, the committed step in lipid A biosynthesis. The protein is UDP-3-O-acyl-N-acetylglucosamine deacetylase of Hamiltonella defensa subsp. Acyrthosiphon pisum (strain 5AT).